The following is a 127-amino-acid chain: Holo-[acyl-carrier-protein] synthase (127 aa).

Residues D7 and E56 each coordinate Mg(2+).

The protein belongs to the P-Pant transferase superfamily. AcpS family. It depends on Mg(2+) as a cofactor.

Its subcellular location is the cytoplasm. The catalysed reaction is apo-[ACP] + CoA = holo-[ACP] + adenosine 3',5'-bisphosphate + H(+). Its function is as follows. Transfers the 4'-phosphopantetheine moiety from coenzyme A to a Ser of acyl-carrier-protein. This Onion yellows phytoplasma (strain OY-M) protein is Holo-[acyl-carrier-protein] synthase.